Consider the following 139-residue polypeptide: D-ribose pyranase (139 aa).

Histidine 20 functions as the Proton donor in the catalytic mechanism. Residues aspartate 28, histidine 106, and 128 to 130 (YAN) contribute to the substrate site.

The protein belongs to the RbsD / FucU family. RbsD subfamily. Homodecamer.

It localises to the cytoplasm. The enzyme catalyses beta-D-ribopyranose = beta-D-ribofuranose. It participates in carbohydrate metabolism; D-ribose degradation; D-ribose 5-phosphate from beta-D-ribopyranose: step 1/2. Its function is as follows. Catalyzes the interconversion of beta-pyran and beta-furan forms of D-ribose. The sequence is that of D-ribose pyranase from Aliivibrio fischeri (strain MJ11) (Vibrio fischeri).